Reading from the N-terminus, the 587-residue chain is 5-aminolevulinate synthase, erythroid-specific, mitochondrial (587 aa).

Residues 1-49 (MVTAAMLLQCCPVPARGPTSLLGKVVKTHQFLFGIGRCPILATQGPNCS) constitute a mitochondrion transit peptide. Position 163 (Arg163) interacts with succinyl-CoA. Cys258 and Phe259 together coordinate pyridoxal 5'-phosphate. Residues Ser280 and Lys299 each contribute to the succinyl-CoA site. Residues Ser332, His360, and Thr388 each contribute to the pyridoxal 5'-phosphate site. Lys391 is a catalytic residue. Lys391 bears the N6-(pyridoxal phosphate)lysine mark. Positions 420 and 421 each coordinate pyridoxal 5'-phosphate. Thr508 contacts succinyl-CoA.

Belongs to the class-II pyridoxal-phosphate-dependent aminotransferase family. As to quaternary structure, homodimer. Interacts with SUCLA2. The cofactor is pyridoxal 5'-phosphate.

The protein resides in the mitochondrion inner membrane. The enzyme catalyses succinyl-CoA + glycine + H(+) = 5-aminolevulinate + CO2 + CoA. The protein operates within porphyrin-containing compound metabolism; protoporphyrin-IX biosynthesis; 5-aminolevulinate from glycine: step 1/1. In terms of biological role, catalyzes the pyridoxal 5'-phosphate (PLP)-dependent condensation of succinyl-CoA and glycine to form aminolevulinic acid (ALA), with CoA and CO2 as by-products. Contributes significantly to heme formation during erythropoiesis. This chain is 5-aminolevulinate synthase, erythroid-specific, mitochondrial (ALAS2), found in Pongo abelii (Sumatran orangutan).